Consider the following 164-residue polypeptide: uncharacterized protein (164 aa).

Residues 26-158 (YAGFWVRFWA…DYIADTTVVH (133 aa)) form the RDD domain. Helical transmembrane passes span 35-55 (AFLL…SPLF) and 66-86 (MFTF…YFAL).

It localises to the cell membrane. This is an uncharacterized protein from Bacillus subtilis (strain 168).